The chain runs to 212 residues: MIFMTNEIVNSTSTSQKLILASQSPRRRELLAQLGYQFSVQASDIDETVEKAETAYDYVLRLAKQKAQHVLDLLPEAERVYSYVLGSDTSVVFNGEILGKPDNEENCIDTLSLLSGNQHQVLTAIALVSHAGVKGQVITTEVTFKTLTKAEISAYWLTGEPQDKAGSYGIQGIAGQFVKTINGSYSAVVGLPLYETAQLLANAGFVGSIHTK.

The Proton acceptor role is filled by aspartate 88.

It belongs to the Maf family. YhdE subfamily. It depends on a divalent metal cation as a cofactor.

It is found in the cytoplasm. The enzyme catalyses dTTP + H2O = dTMP + diphosphate + H(+). It carries out the reaction UTP + H2O = UMP + diphosphate + H(+). In terms of biological role, nucleoside triphosphate pyrophosphatase that hydrolyzes dTTP and UTP. May have a dual role in cell division arrest and in preventing the incorporation of modified nucleotides into cellular nucleic acids. The sequence is that of dTTP/UTP pyrophosphatase from Colwellia psychrerythraea (strain 34H / ATCC BAA-681) (Vibrio psychroerythus).